Here is a 917-residue protein sequence, read N- to C-terminus: Protein Ami (917 aa).

An N-terminal signal peptide occupies residues 1-30 (MKKLVKSAVVFAGLVFIGTSATMITEKASA). An N-acetylmuramoyl-L-alanine amidase domain is found at 118-245 (KPEGIVIHET…YLGGTTHTDP (128 aa)). The tract at residues 262 to 917 (LINEKYKAMQ…KAANLSAKKQ (656 aa)) is GW repeat region, necessary and sufficient for cell surface attachment. GW domains follow at residues 279–358 (YDKA…TFYT), 361–435 (MEKT…TTKY), 440–519 (YDKA…TFYT), 522–596 (MEKN…ATQY), 601–679 (YDKA…TFYT), 682–756 (MEKT…TTKY), 761–840 (YDKA…TFYT), and 843–917 (MEKN…AKKQ).

It in the N-terminal section; belongs to the N-acetylmuramoyl-L-alanine amidase 2 family.

The protein localises to the cell surface. It is found in the cell membrane. In terms of biological role, a bacteriolysin able to lyse both L.monocytogenes and S.aureus. The protein is Protein Ami of Listeria monocytogenes serotype 1/2a (strain EGD / Mackaness).